The chain runs to 153 residues: Superoxide dismutase [Cu-Zn] (153 aa).

Cu cation contacts are provided by histidine 45, histidine 47, and histidine 62. Cysteines 56 and 145 form a disulfide. The Zn(2+) site is built by histidine 62, histidine 70, histidine 79, and aspartate 82. Histidine 119 is a Cu cation binding site.

This sequence belongs to the Cu-Zn superoxide dismutase family. Homodimer. Requires Cu cation as cofactor. The cofactor is Zn(2+).

It localises to the cytoplasm. The catalysed reaction is 2 superoxide + 2 H(+) = H2O2 + O2. Functionally, destroys radicals which are normally produced within the cells and which are toxic to biological systems. This Drosophila willistoni (Fruit fly) protein is Superoxide dismutase [Cu-Zn].